A 112-amino-acid chain; its full sequence is uncharacterized protein (112 aa).

Residues C39, C105, and C107 each contribute to the Fe cation site.

This sequence belongs to the HesB/IscA family. Ycf83 subfamily.

It localises to the plastid. It is found in the chloroplast. This is an uncharacterized protein from Galdieria sulphuraria (Red alga).